The following is a 521-amino-acid chain: Bifunctional purine biosynthesis protein PurH (521 aa).

In terms of domain architecture, MGS-like spans 1-145; it reads MIKQALISVS…KNHRDVTVVV (145 aa).

This sequence belongs to the PurH family.

It carries out the reaction (6R)-10-formyltetrahydrofolate + 5-amino-1-(5-phospho-beta-D-ribosyl)imidazole-4-carboxamide = 5-formamido-1-(5-phospho-D-ribosyl)imidazole-4-carboxamide + (6S)-5,6,7,8-tetrahydrofolate. It catalyses the reaction IMP + H2O = 5-formamido-1-(5-phospho-D-ribosyl)imidazole-4-carboxamide. It functions in the pathway purine metabolism; IMP biosynthesis via de novo pathway; 5-formamido-1-(5-phospho-D-ribosyl)imidazole-4-carboxamide from 5-amino-1-(5-phospho-D-ribosyl)imidazole-4-carboxamide (10-formyl THF route): step 1/1. It participates in purine metabolism; IMP biosynthesis via de novo pathway; IMP from 5-formamido-1-(5-phospho-D-ribosyl)imidazole-4-carboxamide: step 1/1. The sequence is that of Bifunctional purine biosynthesis protein PurH from Burkholderia pseudomallei (strain 1710b).